A 321-amino-acid polypeptide reads, in one-letter code: Acetyl-coenzyme A carboxylase carboxyl transferase subunit alpha (321 aa).

Residues 39–293 (RLQQKSQTLA…RRALGDSLRQ (255 aa)) form the CoA carboxyltransferase C-terminal domain.

It belongs to the AccA family. Acetyl-CoA carboxylase is a heterohexamer composed of biotin carboxyl carrier protein (AccB), biotin carboxylase (AccC) and two subunits each of ACCase subunit alpha (AccA) and ACCase subunit beta (AccD).

The protein resides in the cytoplasm. It catalyses the reaction N(6)-carboxybiotinyl-L-lysyl-[protein] + acetyl-CoA = N(6)-biotinyl-L-lysyl-[protein] + malonyl-CoA. Its pathway is lipid metabolism; malonyl-CoA biosynthesis; malonyl-CoA from acetyl-CoA: step 1/1. In terms of biological role, component of the acetyl coenzyme A carboxylase (ACC) complex. First, biotin carboxylase catalyzes the carboxylation of biotin on its carrier protein (BCCP) and then the CO(2) group is transferred by the carboxyltransferase to acetyl-CoA to form malonyl-CoA. The polypeptide is Acetyl-coenzyme A carboxylase carboxyl transferase subunit alpha (Bordetella avium (strain 197N)).